The following is a 68-amino-acid chain: 1-carboxybiuret hydrolase subunit AtzG (68 aa).

Heterotetramer consisting of 2 AtzE and 2 AtzG subunits.

It participates in xenobiotic degradation; atrazine degradation. Its function is as follows. Important for the activity of the AtzE subunit of 1-carboxybiuret hydrolase. This is 1-carboxybiuret hydrolase subunit AtzG from Pseudomonas sp. (strain ADP).